Consider the following 778-residue polypeptide: Arf-GAP with coiled-coil, ANK repeat and PH domain-containing protein 2 (778 aa).

Positions 1–226 (MKMTVDFEEC…MKDLGAQLDR (226 aa)) constitute a BAR domain. The region spanning 266–361 (GIVMEGYLFK…WIKAVQTSIA (96 aa)) is the PH domain. A disordered region spans residues 371–391 (SEKLDKKSSPSTGSLDSGNES). Over residues 379-388 (SPSTGSLDSG) the composition is skewed to polar residues. 2 positions are modified to phosphoserine: Ser384 and Ser387. The 122-residue stretch at 399–520 (ESALQRVQCV…KFVDKYSVSS (122 aa)) folds into the Arf-GAP domain. The C4-type zinc-finger motif lies at 414 to 437 (CCDCGLADPRWASINLGITLCIEC). Positions 518-596 (VSSSPPEQEK…EPEGERQDSS (79 aa)) are disordered. Phosphoserine is present on Ser521. The segment covering 524-539 (EQEKKVVSKDSEEKRL) has biased composition (basic and acidic residues). The segment covering 550–569 (VRTSIQSSVKSNDSGIQQSS) has biased composition (polar residues). Phosphoserine is present on residues Ser581 and Ser584. ANK repeat units follow at residues 640 to 669 (NKAT…NVNQ), 673 to 702 (QGRG…NQHA), and 706 to 735 (EGKD…NEEM). Tyr742 bears the Phosphotyrosine mark. A Phosphoserine modification is found at Ser775.

In terms of assembly, interacts with RAB35 (GTP-bound form); the interaction is direct and probably recruits ACAP2 to membranes. Interacts with MICALL1; the interaction is indirect through RAB35.

The protein resides in the endosome membrane. It is found in the cell membrane. Its activity is regulated as follows. GAP activity stimulated by phosphatidylinositol 4,5-bisphosphate (PIP2) and phosphatidic acid. In terms of biological role, GTPase-activating protein (GAP) for ADP ribosylation factor 6 (ARF6). Doesn't show GAP activity for RAB35. The protein is Arf-GAP with coiled-coil, ANK repeat and PH domain-containing protein 2 (ACAP2) of Oryctolagus cuniculus (Rabbit).